A 278-amino-acid polypeptide reads, in one-letter code: RsbT co-antagonist protein RsbRD (278 aa).

An STAS domain is found at 160 to 271 (SAPIMPITDG…QSLAKALANK (112 aa)). Thr-181 carries the phosphothreonine modification.

In terms of assembly, probably present in the stressosome with RsbRA, RsbRB, RsbRC and RsbS. In terms of processing, phosphorylated by RsbT.

One of 4 functionally non-identical RsbR paralogs, it functions in the environmental signaling branch of the general stress response. Its function is as follows. Negative regulator of sigma-B activity. Non-phosphorylated RsbS binds to RsbT, preventing its association with RsbU. Requires any one of RsbRA, RsbRB, RsbRC or RsbRD to sequester RsbT. When RsbS and the RsbR paralog(s) are phosphorylated, they release RsbT, which can then bind and activate RsbU. The polypeptide is RsbT co-antagonist protein RsbRD (rsbRD) (Bacillus subtilis (strain 168)).